The sequence spans 227 residues: NADH-quinone oxidoreductase subunit C (227 aa).

This sequence belongs to the complex I 30 kDa subunit family. NDH-1 is composed of 14 different subunits. Subunits NuoB, C, D, E, F, and G constitute the peripheral sector of the complex.

The protein resides in the cell inner membrane. It carries out the reaction a quinone + NADH + 5 H(+)(in) = a quinol + NAD(+) + 4 H(+)(out). In terms of biological role, NDH-1 shuttles electrons from NADH, via FMN and iron-sulfur (Fe-S) centers, to quinones in the respiratory chain. The immediate electron acceptor for the enzyme in this species is believed to be ubiquinone. Couples the redox reaction to proton translocation (for every two electrons transferred, four hydrogen ions are translocated across the cytoplasmic membrane), and thus conserves the redox energy in a proton gradient. The protein is NADH-quinone oxidoreductase subunit C of Coxiella burnetii (strain Dugway 5J108-111).